A 40-amino-acid polypeptide reads, in one-letter code: Plasma membrane ATPase proteolipid 1 (40 aa).

The propeptide occupies 1–2; it reads MT. The chain crosses the membrane as a helical span at residues 3 to 26; sequence LPGGVILVFILVGLACIAIIATII. Topologically, residues 27–40 are cytoplasmic; it reads YRKWQARQRGLQRF.

As to quaternary structure, monomer and homodimer. Associated with the 100 kDa subunit of the plasma membrane H(+)-ATPase.

It is found in the cell membrane. This Saccharomyces cerevisiae (strain ATCC 204508 / S288c) (Baker's yeast) protein is Plasma membrane ATPase proteolipid 1 (PMP1).